We begin with the raw amino-acid sequence, 555 residues long: 2-succinyl-5-enolpyruvyl-6-hydroxy-3-cyclohexene-1-carboxylate synthase (555 aa).

It belongs to the TPP enzyme family. MenD subfamily. Homodimer. It depends on Mg(2+) as a cofactor. Mn(2+) is required as a cofactor. The cofactor is thiamine diphosphate.

It carries out the reaction isochorismate + 2-oxoglutarate + H(+) = 5-enolpyruvoyl-6-hydroxy-2-succinyl-cyclohex-3-ene-1-carboxylate + CO2. It functions in the pathway quinol/quinone metabolism; 1,4-dihydroxy-2-naphthoate biosynthesis; 1,4-dihydroxy-2-naphthoate from chorismate: step 2/7. Its pathway is quinol/quinone metabolism; menaquinone biosynthesis. Catalyzes the thiamine diphosphate-dependent decarboxylation of 2-oxoglutarate and the subsequent addition of the resulting succinic semialdehyde-thiamine pyrophosphate anion to isochorismate to yield 2-succinyl-5-enolpyruvyl-6-hydroxy-3-cyclohexene-1-carboxylate (SEPHCHC). The polypeptide is 2-succinyl-5-enolpyruvyl-6-hydroxy-3-cyclohexene-1-carboxylate synthase (Bacteroides fragilis (strain ATCC 25285 / DSM 2151 / CCUG 4856 / JCM 11019 / LMG 10263 / NCTC 9343 / Onslow / VPI 2553 / EN-2)).